Here is a 190-residue protein sequence, read N- to C-terminus: Putative manganese efflux pump MntP (190 aa).

The next 6 helical transmembrane spans lie at 3–23 (PASI…AAVG), 39–59 (IGLI…FIGQ), 65–85 (VANW…LHMI), 106–128 (WLLA…GLAF), 133–155 (IWVA…VMLG), and 157–177 (AIGT…LIIV).

The protein belongs to the MntP (TC 9.B.29) family.

The protein localises to the cell inner membrane. In terms of biological role, probably functions as a manganese efflux pump. This is Putative manganese efflux pump MntP from Pseudomonas fluorescens (strain ATCC BAA-477 / NRRL B-23932 / Pf-5).